A 702-amino-acid chain; its full sequence is MA3 DOMAIN-CONTAINING TRANSLATION REGULATORY FACTOR 1 (702 aa).

Residues 39–66 (LNIKSPTGGKGPVAGIPNRHVRRTHSGK) are disordered. The span at 57-66 (RHVRRTHSGK) shows a compositional bias: basic residues. One can recognise an MI 1 domain in the interval 122–243 (DYKKSVVSII…PPVFLVRSKK (122 aa)). The short motif at 273–280 (EKKWGGST) is the Nuclear localization signal 1 element. MI domains lie at 286–407 (ETKK…TSDQ), 420–541 (QYKK…DIST), and 583–702 (DAKD…SATQ). Residues 458 to 465 (LKRLITLA) carry the Nuclear localization signal 2 motif.

The protein belongs to the PDCD4 family. As to quaternary structure, binds to EIF4A1, S6K1 and S6K2. The association with ribosomes is modulated by cellular energy status and TOR activity. Phosphorylation by S6 kinases (e.g. S6K1 and S6K2) is modulated by cellular energy status and TOR activity. Mostly expressed in vegetative tissues, such as leaves, roots and stems, and, to a lower extent, in reproductive tissues, such as flower buds and flowers.

The protein localises to the nucleus. Its subcellular location is the cytoplasm. It localises to the cytosol. Involved in target of rapamycin (TOR)-regulated translation control, especially under energy-deficient conditions. This is MA3 DOMAIN-CONTAINING TRANSLATION REGULATORY FACTOR 1 from Arabidopsis thaliana (Mouse-ear cress).